A 176-amino-acid chain; its full sequence is Inorganic pyrophosphatase (176 aa).

Positions 30, 44, and 56 each coordinate substrate. Positions 66, 71, and 103 each coordinate Mg(2+). Substrate is bound at residue Y142.

Belongs to the PPase family. Homohexamer. Mg(2+) is required as a cofactor.

Its subcellular location is the cytoplasm. It carries out the reaction diphosphate + H2O = 2 phosphate + H(+). Catalyzes the hydrolysis of inorganic pyrophosphate (PPi) forming two phosphate ions. This chain is Inorganic pyrophosphatase, found in Aeropyrum pernix (strain ATCC 700893 / DSM 11879 / JCM 9820 / NBRC 100138 / K1).